The primary structure comprises 168 residues: ATP synthase subunit b (168 aa).

The helical transmembrane segment at 9 to 29 (AIPFGTIAYTLFIFLLLLVML) threads the bilayer.

The protein belongs to the ATPase B chain family. In terms of assembly, F-type ATPases have 2 components, F(1) - the catalytic core - and F(0) - the membrane proton channel. F(1) has five subunits: alpha(3), beta(3), gamma(1), delta(1), epsilon(1). F(0) has three main subunits: a(1), b(2) and c(10-14). The alpha and beta chains form an alternating ring which encloses part of the gamma chain. F(1) is attached to F(0) by a central stalk formed by the gamma and epsilon chains, while a peripheral stalk is formed by the delta and b chains.

The protein resides in the cell membrane. Its function is as follows. F(1)F(0) ATP synthase produces ATP from ADP in the presence of a proton or sodium gradient. F-type ATPases consist of two structural domains, F(1) containing the extramembraneous catalytic core and F(0) containing the membrane proton channel, linked together by a central stalk and a peripheral stalk. During catalysis, ATP synthesis in the catalytic domain of F(1) is coupled via a rotary mechanism of the central stalk subunits to proton translocation. Component of the F(0) channel, it forms part of the peripheral stalk, linking F(1) to F(0). This chain is ATP synthase subunit b, found in Bacillus cereus (strain ATCC 10987 / NRS 248).